The following is a 98-amino-acid chain: uncharacterized protein (98 aa).

This is an uncharacterized protein from Frog virus 3 (isolate Goorha) (FV-3).